We begin with the raw amino-acid sequence, 2426 residues long: Protein SON (2426 aa).

Ala2 is modified (N-acetylalanine). N6-acetyllysine is present on Lys16. The span at 24–42 (LSSGRNEGQLNGETNTPIE) shows a compositional bias: polar residues. Residues 24–56 (LSSGRNEGQLNGETNTPIEGNQAGDAAASARSL) form a disordered region. A Glycyl lysine isopeptide (Lys-Gly) (interchain with G-Cter in SUMO2) cross-link involves residue Lys64. A compositionally biased stretch (basic and acidic residues) spans 77-88 (LRYKPDLKEGSR). A disordered region spans residues 77 to 155 (LRYKPDLKEG…GNIDLESDSF (79 aa)). At Ser94 the chain carries Phosphoserine. Positions 106–130 (KKSKKHKKHKNKKKKKKKEKEKKYK) are enriched in basic residues. The span at 131 to 146 (RQPEESESKTKSHDDG) shows a compositional bias: basic and acidic residues. Phosphoserine occurs at positions 142, 152, 154, 160, and 283. Lys288 carries the post-translational modification N6-acetyllysine. Residues 305–328 (TLVVSSETPTEVYPEPSTSTTMDF) form a disordered region. Thr400 is subject to Phosphothreonine. The interval 406–442 (PGPSATPVPELPGPLSTPVPELPGPPATAVPELPGPS) is disordered. A compositionally biased stretch (pro residues) spans 409-442 (SATPVPELPGPLSTPVPELPGPPATAVPELPGPS). The interval 726 to 895 (LASNTMDSQM…LASGTMDAQM (170 aa)) is 17 X 10 AA tandem repeats of L-A-[ST]-[NSG]-[TS]-MDSQM. The 11 X 7 AA tandem repeats of [DR]-P-Y-R-[LI][AG][QHP] stretch occupies residues 912-988 (DPYRLAQDPY…IAPRPYRLAP (77 aa)). An Omega-N-methylarginine modification is found at Arg950. Residue Thr959 is modified to Phosphothreonine. Ser998 bears the Phosphoserine mark. Repeat copies occupy residues 1006–1011 (ERSMMS), 1014–1019 (ERSMMS), 1021–1026 (ERSMMS), 1030–1035 (ERSMMS), 1038–1043 (ERSMMS), 1046–1051 (ERSMMS), 1055–1060 (ERSMMS), 1063–1068 (ERSMMS), 1071–1076 (ERSMMS), 1080–1085 (DRSMMS), 1089–1094 (DRSMMS), 1100–1105 (DRSMMS), 1111–1116 (DRSMMS), and 1121–1126 (DRSMMS). The 14 X 6 AA repeats of [ED]-R-S-M-M-S stretch occupies residues 1006–1126 (ERSMMSSYER…SYTADRSMMS (121 aa)). At Arg1007 the chain carries Asymmetric dimethylarginine. Arg1022 bears the Asymmetric dimethylarginine mark. A phosphoserine mark is found at Ser1035 and Ser1043. Residues Ser1060 and Ser1068 each carry the phosphoserine modification. Phosphoserine is present on Ser1082. The tract at residues 1144–1236 (YMVPPLPPEE…PTDYSVSASD (93 aa)) is disordered. The interval 1147–1179 (PPLPPEEPPTMPPLPPEEPPMTPPLPPEEPPEG) is 3 X 11 AA tandem repats of P-P-L-P-P-E-E-P-P-[TME]-[MTG]. The segment covering 1147–1180 (PPLPPEEPPTMPPLPPEEPPMTPPLPPEEPPEGP) has biased composition (pro residues). Over residues 1186–1196 (QSALTAENTWP) the composition is skewed to polar residues. Over residues 1198–1224 (EVPSSPSEESVSQPEPPVSQSEISEPS) the composition is skewed to low complexity. A 4 X 8 AA tandem repeats of V-L-E-SS-[AVT]-VT region spans residues 1359–1390 (VLESSAVTVLESSTVTVLESSTVTVLEPSVVT). 2 positions are modified to phosphoserine: Ser1556 and Ser1651. The interval 1645-1722 (TSPSGGSEAD…KETLPDSGFS (78 aa)) is disordered. Positions 1677–1689 (KDTEEPLPVKESD) are enriched in basic and acidic residues. Phosphoserine is present on residues Ser1697, Ser1701, Ser1747, Ser1759, Ser1766, Ser1769, Ser1782, and Ser1783. The tract at residues 1754–2054 (GPLLASDVGR…RSPKRLTDLD (301 aa)) is disordered. Basic and acidic residues-rich tracts occupy residues 1790 to 1801 (YEIFVKVKDTHE), 1809 to 1822 (RDKG…DSSL), and 1830 to 1845 (KSSE…ESRS). Basic residues-rich tracts occupy residues 1846-1909 (RARK…RKRS) and 1917-1948 (TVRA…RRRS). 9 tandem repeats follow at residues 1925-1931 (PSRRSRS), 1934-1952 (PSRR…FSIS), 1953-1959 (PSRRSRT), 1960-1966 (PSRRSRT), 1967-1973 (PSRRSRT), 1974-1980 (PSRRSRT), 1981-1987 (PSRRSRT), 1988-1994 (PSRRSRT), and 1995-2013 (PSRR…FSIS). The segment at 1925 to 1994 (PSRRSRSHTP…SRTPSRRSRT (70 aa)) is 7 X 7 AA repeats of P-S-R-R-S-R-[TS]. The segment at 1934 to 2013 (PSRRRRSRSV…VVRRRSFSIS (80 aa)) is 2 X 19 AA repeats of P-S-R-R-R-R-S-R-S-V-V-R-R-R-S-F-S-I-S. Phosphoserine occurs at positions 1948, 1950, and 1952. The segment covering 1955–2009 (RRSRTPSRRSRTPSRRSRTPSRRSRTPSRRSRTPSRRSRTPSRRRRSRSVVRRRS) has biased composition (basic residues). Phosphoserine occurs at positions 2009, 2011, 2013, 2029, and 2031. The interval 2013 to 2039 (SPVRLRRSRTPLRRRFSRSPIRRKRSR) is 3 X tandem repeats of [ST]-P-[VLI]-R-[RL]-[RK]-[RF]-S-R. Basic residues predominate over residues 2016–2038 (RLRRSRTPLRRRFSRSPIRRKRS). Basic and acidic residues predominate over residues 2039–2054 (RSSERGRSPKRLTDLD). N6-acetyllysine; alternate is present on Lys2055. A Glycyl lysine isopeptide (Lys-Gly) (interchain with G-Cter in SUMO2); alternate cross-link involves residue Lys2055. Lys2092 participates in a covalent cross-link: Glycyl lysine isopeptide (Lys-Gly) (interchain with G-Cter in SUMO2). Ser2129 is subject to Phosphoserine. Residue Lys2149 forms a Glycyl lysine isopeptide (Lys-Gly) (interchain with G-Cter in SUMO2) linkage. Thr2163 carries the post-translational modification Phosphothreonine. A disordered region spans residues 2200 to 2220 (KNGEENKDDDNVFSSNLPSEP). Ser2238 carries the phosphoserine modification. Positions 2305 to 2351 (TGGMGAVLMRKMGWREGEGLGKNKEGNKEPILVDFKTDRKGLVAVGE) constitute a G-patch domain. Positions 2371–2426 (HPVSALMEICNKRRWQPPEFLLVHDSGPDHRKHFLFRVLRNGALTRPNCMFFLNRY) constitute a DRBM domain.

As to quaternary structure, interacts with SRSF2. Associates with the spliceosome. Interacts with the AML1-MTG8 (AML1-ETO) fusion protein, possibly leading to trigger signals inhibiting leukemogenesis. Interacts with USH1G. Widely expressed, with the higher expression seen in leukocyte and heart.

The protein resides in the nucleus speckle. In terms of biological role, RNA-binding protein that acts as a mRNA splicing cofactor by promoting efficient splicing of transcripts that possess weak splice sites. Specifically promotes splicing of many cell-cycle and DNA-repair transcripts that possess weak splice sites, such as TUBG1, KATNB1, TUBGCP2, AURKB, PCNT, AKT1, RAD23A, and FANCG. Probably acts by facilitating the interaction between Serine/arginine-rich proteins such as SRSF2 and the RNA polymerase II. Also binds to DNA; binds to the consensus DNA sequence: 5'-GA[GT]AN[CG][AG]CC-3'. May indirectly repress hepatitis B virus (HBV) core promoter activity and transcription of HBV genes and production of HBV virions. Essential for correct RNA splicing of multiple genes critical for brain development, neuronal migration and metabolism, including TUBG1, FLNA, PNKP, WDR62, PSMD3, PCK2, PFKL, IDH2, and ACY1. This chain is Protein SON (SON), found in Homo sapiens (Human).